Consider the following 350-residue polypeptide: Ion-translocating oxidoreductase complex subunit D (350 aa).

The next 4 membrane-spanning stretches (helical) occupy residues 37–57 (YYFGYGTLVQLLLAITVAYLA), 78–109 (ALVTASLLAVAIPPLAPWWLIVIGTLFAIVIV), 124–144 (AMAAYVLLLISFPVQMTSWVA), and 158–178 (TFNSIFQLNAGYAADFFHLAI). Threonine 185 carries the FMN phosphoryl threonine modification. 5 helical membrane passes run 212 to 232 (SVGEGWFWVNMAYLVGGLVML), 239 to 259 (WHISGAIVLTLFVCASIGFLI), 264 to 284 (FVSPIMHLFSGGTMLAAFFIA), 298 to 318 (LIFGAMIGLLIYLIRTFGGYP), and 319 to 339 (DAVAFAVLLANMCAPFIDYYV).

The protein belongs to the NqrB/RnfD family. The complex is composed of six subunits: RnfA, RnfB, RnfC, RnfD, RnfE and RnfG. It depends on FMN as a cofactor.

The protein resides in the cell inner membrane. Part of a membrane-bound complex that couples electron transfer with translocation of ions across the membrane. The protein is Ion-translocating oxidoreductase complex subunit D of Shewanella frigidimarina (strain NCIMB 400).